A 403-amino-acid chain; its full sequence is Phosphoglycerate kinase (403 aa).

Substrate contacts are provided by residues 24–26 (DLN), arginine 39, 62–65 (HLGR), arginine 121, and arginine 161. Residues lysine 211, glycine 299, glutamate 330, and 359 to 362 (GGDS) contribute to the ATP site.

This sequence belongs to the phosphoglycerate kinase family. In terms of assembly, monomer.

The protein resides in the cytoplasm. It catalyses the reaction (2R)-3-phosphoglycerate + ATP = (2R)-3-phospho-glyceroyl phosphate + ADP. The protein operates within carbohydrate degradation; glycolysis; pyruvate from D-glyceraldehyde 3-phosphate: step 2/5. This Rhodococcus jostii (strain RHA1) protein is Phosphoglycerate kinase.